We begin with the raw amino-acid sequence, 163 residues long: Ribosome maturation factor RimM (163 aa).

Residues 90–161 (EGRHYWGDLE…VVVDPPEGLL (72 aa)) form the PRC barrel domain.

This sequence belongs to the RimM family. Binds ribosomal protein uS19.

Its subcellular location is the cytoplasm. An accessory protein needed during the final step in the assembly of 30S ribosomal subunit, possibly for assembly of the head region. Essential for efficient processing of 16S rRNA. May be needed both before and after RbfA during the maturation of 16S rRNA. It has affinity for free ribosomal 30S subunits but not for 70S ribosomes. The protein is Ribosome maturation factor RimM of Anaeromyxobacter dehalogenans (strain 2CP-C).